A 315-amino-acid polypeptide reads, in one-letter code: ATP synthase gamma chain (315 aa).

The protein belongs to the ATPase gamma chain family. As to quaternary structure, F-type ATPases have 2 components, CF(1) - the catalytic core - and CF(0) - the membrane proton channel. CF(1) has five subunits: alpha(3), beta(3), gamma(1), delta(1), epsilon(1). CF(0) has three main subunits: a, b and c.

It localises to the cellular thylakoid membrane. In terms of biological role, produces ATP from ADP in the presence of a proton gradient across the membrane. The gamma chain is believed to be important in regulating ATPase activity and the flow of protons through the CF(0) complex. The protein is ATP synthase gamma chain of Nostoc sp. (strain PCC 7120 / SAG 25.82 / UTEX 2576).